Reading from the N-terminus, the 597-residue chain is Aspartate--tRNA(Asp/Asn) ligase (597 aa).

Position 170 (E170) interacts with L-aspartate. An aspartate region spans residues 194–197 (QLFK). R216 serves as a coordination point for L-aspartate. Residues 216-218 (RDE) and Q225 each bind ATP. H448 provides a ligand contact to L-aspartate. Residue E482 participates in ATP binding. An L-aspartate-binding site is contributed by R489. Residue 534 to 537 (GWDR) participates in ATP binding. The disordered stretch occupies residues 558–597 (GGGVDPLTDAPAPITAAQRKESGIDAKPEKAEKAGKPADA). Residues 575–597 (QRKESGIDAKPEKAEKAGKPADA) are compositionally biased toward basic and acidic residues.

It belongs to the class-II aminoacyl-tRNA synthetase family. Type 1 subfamily. As to quaternary structure, homodimer.

Its subcellular location is the cytoplasm. The enzyme catalyses tRNA(Asx) + L-aspartate + ATP = L-aspartyl-tRNA(Asx) + AMP + diphosphate. In terms of biological role, aspartyl-tRNA synthetase with relaxed tRNA specificity since it is able to aspartylate not only its cognate tRNA(Asp) but also tRNA(Asn). Reaction proceeds in two steps: L-aspartate is first activated by ATP to form Asp-AMP and then transferred to the acceptor end of tRNA(Asp/Asn). The sequence is that of Aspartate--tRNA(Asp/Asn) ligase from Mycobacteroides abscessus (strain ATCC 19977 / DSM 44196 / CCUG 20993 / CIP 104536 / JCM 13569 / NCTC 13031 / TMC 1543 / L948) (Mycobacterium abscessus).